The sequence spans 289 residues: MYG1 protein CT_386 (289 aa).

Belongs to the MYG1 family.

This Chlamydia trachomatis serovar D (strain ATCC VR-885 / DSM 19411 / UW-3/Cx) protein is MYG1 protein CT_386.